The following is a 672-amino-acid chain: Spermatid perinuclear RNA-binding protein (672 aa).

A DZF domain is found at 5–363 (RSFANDDRHV…ALKRPFEDGL (359 aa)). Positions 349–371 (GAGSSALKRPFEDGLGDDKDPNK) are disordered. Residues 357–371 (RPFEDGLGDDKDPNK) show a composition bias toward basic and acidic residues. The DRBM 1 domain maps to 387 to 453 (DLMNALMRLN…AVKVLQAMGY (67 aa)). The span at 467 to 476 (DEKSDNESKN) shows a compositional bias: basic and acidic residues. Residues 467 to 514 (DEKSDNESKNDTVSSNSSNNTGNSTTETSSTLEVRTQGPILTASGKNP) form a disordered region. Over residues 477-497 (DTVSSNSSNNTGNSTTETSST) the composition is skewed to low complexity. Residues 510–576 (SGKNPVMELN…ALAALEKLFS (67 aa)) form the DRBM 2 domain. Arg612 and Arg617 each carry asymmetric dimethylarginine.

As to quaternary structure, interacts with EIF2AK2. Associates with microtubules; it is unsure whether such interaction is direct or indirect. Isoform 2 is expressed in spermatocytes (at protein level). Expressed in testis, thymus, ovary, liver, kidney, heart, spleen and brain. Expressed in cortex, dentate gyrus and Purkinje cell layer and granule cells of the cerebellum.

Its subcellular location is the cytoplasm. The protein resides in the cytoskeleton. Its function is as follows. Involved in spermatogenesis and sperm function. Plays a role in regulation of cell growth. Binds to double-stranded DNA and RNA. Binds most efficiently to poly(I:C) RNA than to poly(dI:dC) DNA. Also binds to single-stranded poly(G) RNA. Binds non-specifically to the mRNA PRM1 3'-UTR and adenovirus VA RNA. The protein is Spermatid perinuclear RNA-binding protein (Strbp) of Mus musculus (Mouse).